Reading from the N-terminus, the 349-residue chain is Phenylalanine--tRNA ligase alpha subunit (349 aa).

Mg(2+) is bound at residue Glu-259.

Belongs to the class-II aminoacyl-tRNA synthetase family. Phe-tRNA synthetase alpha subunit type 1 subfamily. Tetramer of two alpha and two beta subunits. Mg(2+) serves as cofactor.

The protein localises to the cytoplasm. The enzyme catalyses tRNA(Phe) + L-phenylalanine + ATP = L-phenylalanyl-tRNA(Phe) + AMP + diphosphate + H(+). This is Phenylalanine--tRNA ligase alpha subunit from Lactobacillus delbrueckii subsp. bulgaricus (strain ATCC 11842 / DSM 20081 / BCRC 10696 / JCM 1002 / NBRC 13953 / NCIMB 11778 / NCTC 12712 / WDCM 00102 / Lb 14).